Reading from the N-terminus, the 232-residue chain is Esterase YpfH (232 aa).

Catalysis depends on charge relay system residues Ser-111, Asp-159, and His-191.

The protein belongs to the AB hydrolase superfamily. AB hydrolase 2 family.

Displays esterase activity toward palmitoyl-CoA and pNP-butyrate. This Escherichia coli (strain K12) protein is Esterase YpfH (ypfH).